Reading from the N-terminus, the 498-residue chain is Type VI secretion system sheath protein TssC1 (498 aa).

Forms a heterodimer with TssB1. Heterodimers assemble to form the sheath of the T6SS machinery. Interacts with TssA1.

Core component of the H1 type VI (H1-T6SS) secretion system that plays a role in the release of toxins targeting both eukaryotic and prokaryotic species. Forms the sheath of the structure by assembling into tubules together with TssB1 resulting in the stacking of cogwheel-like structures showing predominantly a 12-fold symmetry. The sheath contracts to provide the energy needed for effector delivery. This is Type VI secretion system sheath protein TssC1 from Pseudomonas aeruginosa (strain ATCC 15692 / DSM 22644 / CIP 104116 / JCM 14847 / LMG 12228 / 1C / PRS 101 / PAO1).